Consider the following 159-residue polypeptide: Ribosomal RNA large subunit methyltransferase H (159 aa).

Residues G108 and 127 to 132 contribute to the S-adenosyl-L-methionine site; that span reads FSKMTF.

This sequence belongs to the RNA methyltransferase RlmH family. Homodimer.

The protein localises to the cytoplasm. It carries out the reaction pseudouridine(1915) in 23S rRNA + S-adenosyl-L-methionine = N(3)-methylpseudouridine(1915) in 23S rRNA + S-adenosyl-L-homocysteine + H(+). In terms of biological role, specifically methylates the pseudouridine at position 1915 (m3Psi1915) in 23S rRNA. This chain is Ribosomal RNA large subunit methyltransferase H, found in Clostridium beijerinckii (strain ATCC 51743 / NCIMB 8052) (Clostridium acetobutylicum).